The chain runs to 447 residues: Naphthalene 1,2-dioxygenase system, large oxygenase component (447 aa).

Residues 37 to 135 form the Rieske domain; the sequence is WLFLTHDSLI…IKKKCLGLKE (99 aa). [2Fe-2S] cluster contacts are provided by C79, H81, C99, and H102. H206, H211, and D360 together coordinate Fe cation.

Belongs to the bacterial ring-hydroxylating dioxygenase alpha subunit family. In terms of assembly, the naphthalene dioxygenase (NDO) multicomponent enzyme system is composed of an electron transfer component and a dioxygenase component (iron sulfur protein (ISP)). The electron transfer component is composed of a ferredoxin reductase (NagAa) and a ferredoxin (NagAb), and the dioxygenase component is formed by a large alpha subunit (NagAc) and a small beta subunit (NagAd). The cofactor is [2Fe-2S] cluster. Fe(2+) is required as a cofactor.

The catalysed reaction is naphthalene + NADH + O2 + H(+) = (1R,2S)-1,2-dihydronaphthalene-1,2-diol + NAD(+). Its pathway is aromatic compound metabolism; naphthalene degradation. Its function is as follows. Component of the naphthalene dioxygenase (NDO) multicomponent enzyme system which catalyzes the incorporation of both atoms of molecular oxygen into naphthalene to form cis-(1R,2S)-dihydroxy-1,2-dihydronaphthalene. The alpha subunit has a catalytic role in the holoenzyme. Also able to use styrene as substrate. The chain is Naphthalene 1,2-dioxygenase system, large oxygenase component from Ralstonia sp.